Consider the following 705-residue polypeptide: Polyribonucleotide nucleotidyltransferase (705 aa).

The Mg(2+) site is built by D486 and D492. Positions P553 to I612 constitute a KH domain. Residues G622–K690 enclose the S1 motif domain.

The protein belongs to the polyribonucleotide nucleotidyltransferase family. As to quaternary structure, component of the RNA degradosome, which is a multiprotein complex involved in RNA processing and mRNA degradation. It depends on Mg(2+) as a cofactor.

The protein resides in the cytoplasm. It carries out the reaction RNA(n+1) + phosphate = RNA(n) + a ribonucleoside 5'-diphosphate. In terms of biological role, involved in mRNA degradation. Catalyzes the phosphorolysis of single-stranded polyribonucleotides processively in the 3'- to 5'-direction. This Yersinia pseudotuberculosis serotype O:3 (strain YPIII) protein is Polyribonucleotide nucleotidyltransferase.